We begin with the raw amino-acid sequence, 198 residues long: MSFAEKITGLLARPNQQDPVGGPEQPWYLKYGSRLLGIVAAFFAILFGLWNVLSIITLSVSCLVAGIIQMIAGFIVMVLEAPCCFVCIEQVNGIADKVDAKPMYFRAGLYCALAVPPIFMCFGLASLFGSGLIFATGAVYAMMALGKKASAEDMRAAAQQTGYGGNGTAASTTNDRAGIVNNAQPFSFTGAVGTDSNV.

3 consecutive transmembrane segments (helical) span residues 36 to 56 (LGIV…LSII), 67 to 89 (IIQM…VCIE), and 114 to 134 (AVPP…GLIF).

The protein belongs to the calcium channel flower family. As to quaternary structure, homomultimer. Associates with the dally/ magu complex.

It localises to the cell membrane. The protein localises to the cytoplasmic vesicle. It is found in the secretory vesicle. The protein resides in the synaptic vesicle membrane. Its subcellular location is the presynaptic cell membrane. It localises to the endosome. Channel activity is inhibited by La(3+), which reduces Ca(2+) influx and thus inhibits it's function in promoting activity-dependent bulk endocytosis (ADBE) in response to high stimuli. In terms of biological role, transmembrane protein which mediates synaptic endocytosis, fitness-based cell culling, neuronal culling, morphogen gradient scaling, and calcium transport. Regulates synaptic endocytosis and hence couples exo- with endocytosis. Controls two major modes of synaptic vesicle (SV) endocytosis in the synaptic boutons of neuromuscular junctions (NMJs); Ca(2+) channel-independent Clathrin-mediated endocytosis (CME) in response to mild stimulation, and Ca(2+) channel-dependent activity-dependent bulk endocytosis (ADBE) in response to strong stimulation. Functions in ADBE and subsequent SV reformation from bulk endosomes by initiating Ca(2+) channel-dependent phosphatidylinositol 4,5-bisphosphate (PtdIns(4,5)P2) compartmentalization in synaptic boutons. There it acts at the periactive zone to provide the low Ca(2+) levels required to initiate Calcineurin activation and upregulate PtdIns(4,5)P2. Conversely PtdIns(4,5)P2 enhances fwe Ca(2+) channel-activity, establishing a positive feedback loop that induces PtdIns(4,5)P2 microdomain at the periactive zone. These microdomains trigger bulk membrane invagination (i.e. ADBE) by triggering actin polymerization while also promoting localization of fwe to bulk endosomes, thereby removing the ADBE trigger to reduce endocytosis and prevent excess membrane uptake. PtdIns(4,5)P2 then promotes SV reformation from the bulk endosomes, to coordinate ADBE and subsequent SV reformation. Different combinations of the flower isoforms at the cell membrane are also required for the identification and elimination of suboptimal or supernumerary cells during development, regeneration, and adulthood. Required for the recognition and elimination of unfit cells in the developing wing during cell competition. In the developing pupal retina, mediates the elimination of unwanted postmitotic neurons, including supernumerary photoreceptor neurons that form at the periphery of the retina and are contained within incomplete ommatidia units. Also required for efficient elimination and replacement of old neurons by newly generated neurons during regeneration in the adult brain following mechanical injury. Downstream of the flower fitness fingerprints, cells identified as unwanted or unfit are eliminated via apoptosis through the expression of ahuizotl (azot). However, the cells marked for elimination by the flower isoforms only undergo apoptosis if additional thresholds are met; (1) their neighboring fit/healthy cells express different levels of the fwe isoforms, and (2) the levels of the protective signal SPARC expressed by the loser or unwanted cells are unable to inhibit caspase activation. These additional thresholds for flower-mediated apoptosis, allows useful cells to recover from transient and limited stress before they are unnecessarily eliminated. Functions with dally and magu in a mechanism of scaling, which utilises apoptosis to ensure that the dpp morphogen gradient, which mediates organ growth, remains proportional to the size of the growing wing. In this mechanism, fwe represses dally- and Magu-dependent activity in expanding the gradient, and dally/Magu inhibits fwe-dependent apoptosis to keep cell death rate low. When the levels of these different proteins are optimally regulated the gradient correctly scales with organ growth but when this fails, fwe-mediated apoptosis is activated to trim the developing tissue to match the correct size of the gradient. The protein is Calcium channel flower of Drosophila persimilis (Fruit fly).